Consider the following 838-residue polypeptide: MLGLLKKVVGDPSQRQLKKNQKIADQVEALSDEMKSLSDDGLRQKTEEFKKRYKNGESLDDLLPEAYAVVREAATRVLNMTPYPVQILGAIALHQGNIAEMKTGEGKTLVGTMPVYLNALAGKGVHVVTVNDYLARRDSEQMGAMFEFLGLTVGLNVPGLSKEEKKEAYQADITYGTNNEFGFDYLRDNMVLYKEQMVQRSLNFALVDEVDSILIDEARTPLIISGSVERSTKLYSQANSFVRVLKNEEDYTLDEKTKSVQLTEEGVNKAERAFNIDNLFDQRHVQLLHHINQAMKAHVVMHRDADYVVENGEIVIVDQFTGRLMKGRRYSDGLHQAIEAKEGLQIQRESMTLASITFQNYFRMYQKLAGMTGTAKTEEEEFRNIYGMDVMVIPTNKPVIRDDRPDLIFKTMDAKFKAVVNEIEELYKKGQPVLVGTVSVETSELVSTLLKKRRIPHHVLNAKNHEKEAEIIENAGHRGAVTIATNMAGRGTDIKLGEGVRELGGLHVLGTERHESRRIDNQLRGRSGRQGDPGSSQFYLSMEDELMRRFGSDNMRAMMDKLGMEEDQPIESKLVSRAVETAQKRVEGNNFDARKQILQYDDVMREQREIIYKQRMEVLESDNLREIVEKMILSVIERNVQLHTPESEVPEDWDYGAIVNFMKANLLNEDDLTEKDIWGKDPEEIVEIIYDKVIERYNKKEEEFTPEHMREFEKVIMLRTVDRKWMNHIDQMDQLRQGIHLRAYGQNDPLREYRFEGFEMFEAMVASIEEEVAMYVMKAQVQQNLQREKVAEGQAVQPKPTDGDSKAKRQPVRKKETVGRNEPCPCGSGKKYKNCCGQ.

Residues Q86, 104 to 108 (GEGKT), and D493 each bind ATP. Disordered regions lie at residues 517–536 (RRID…PGSS) and 789–838 (KVAE…CCGQ). Residues 801-819 (TDGDSKAKRQPVRKKETVG) show a composition bias toward basic and acidic residues. Residues C824, C826, C835, and C836 each coordinate Zn(2+).

The protein belongs to the SecA family. In terms of assembly, monomer and homodimer. Part of the essential Sec protein translocation apparatus which comprises SecA, SecYEG and auxiliary proteins SecDF. Other proteins may also be involved. It depends on Zn(2+) as a cofactor.

The protein localises to the cell membrane. Its subcellular location is the cytoplasm. It catalyses the reaction ATP + H2O + cellular proteinSide 1 = ADP + phosphate + cellular proteinSide 2.. Functionally, part of the Sec protein translocase complex. Interacts with the SecYEG preprotein conducting channel. Has a central role in coupling the hydrolysis of ATP to the transfer of proteins into and across the cell membrane, serving as an ATP-driven molecular motor driving the stepwise translocation of polypeptide chains across the membrane. In Halalkalibacterium halodurans (strain ATCC BAA-125 / DSM 18197 / FERM 7344 / JCM 9153 / C-125) (Bacillus halodurans), this protein is Protein translocase subunit SecA.